We begin with the raw amino-acid sequence, 342 residues long: MKASPKKLLATLRGARHERTPLWLMRQAGRYLPEYRALRESKGGFLELCYDPEAAAEVTLQPIRRFGFDGAILFSDILVIPHALGQHLWFEAGEGPRLAPPLVDGALASLEAAPQRLDPVYATVARVAASLPPETTFLGFAGSPWTVATYMVAGRGSKDQAAARRMAFADPAAFGAIIDAIADLTVTYLSGQIEQGVDAVQLFDSWAGSLSPAQFEQWVIAPNAGIVRRLKALHPDTPVIGFPKGAGGKLRAYAEETGVDAIGLDETVDPTWADAALPSQLPVQGNLDPLALVAGGAALDAAIDRILAAFPSRPHIFNLGHGIVPDTPVAHVEHLIKRVRGG.

Substrate is bound by residues 26-30 (RQAGR), aspartate 76, tyrosine 150, serine 205, and histidine 321.

Belongs to the uroporphyrinogen decarboxylase family. In terms of assembly, homodimer.

The protein resides in the cytoplasm. The enzyme catalyses uroporphyrinogen III + 4 H(+) = coproporphyrinogen III + 4 CO2. Its pathway is porphyrin-containing compound metabolism; protoporphyrin-IX biosynthesis; coproporphyrinogen-III from 5-aminolevulinate: step 4/4. In terms of biological role, catalyzes the decarboxylation of four acetate groups of uroporphyrinogen-III to yield coproporphyrinogen-III. This is Uroporphyrinogen decarboxylase from Sphingopyxis alaskensis (strain DSM 13593 / LMG 18877 / RB2256) (Sphingomonas alaskensis).